A 1194-amino-acid chain; its full sequence is Metabotropic glutamate receptor 1 (1194 aa).

The first 18 residues, 1–18, serve as a signal peptide directing secretion; it reads MVGLLLFFFPAIFLEVSL. Residues 19 to 592 lie on the Extracellular side of the membrane; that stretch reads LPRSPGRKVL…VRYLEWSNIE (574 aa). Cys67 and Cys109 are oxidised to a cystine. Tyr74 contributes to the L-glutamate binding site. A glycan (N-linked (GlcNAc...) asparagine) is linked at Asn98. Residues Ser165 and 186–188 contribute to the L-glutamate site; that span reads SAT. Residue Asn223 is glycosylated (N-linked (GlcNAc...) asparagine). Tyr236 serves as a coordination point for L-glutamate. An intrachain disulfide couples Cys289 to Cys291. Residue Asp318 coordinates L-glutamate. The cysteines at positions 378 and 394 are disulfide-linked. Residue Asn397 is glycosylated (N-linked (GlcNAc...) asparagine). L-glutamate is bound at residue Lys409. Cys432 and Cys439 are oxidised to a cystine. An N-linked (GlcNAc...) asparagine glycan is attached at Asn515. The chain crosses the membrane as a helical span at residues 593-615; the sequence is SIIAIAFSCLGILVTLFVTLIFV. The Cytoplasmic portion of the chain corresponds to 616-629; sequence LYRDTPVVKSSSRE. A helical membrane pass occupies residues 630–650; sequence LCYIILAGIFLGYVCPFTLIA. Residues 651 to 658 are Extracellular-facing; it reads KPTTTSCY. Cysteines 657 and 746 form a disulfide. The helical transmembrane segment at 659–680 threads the bilayer; it reads LQRLLVGLSSAMCYSALVTKTN. Residues 681-703 are Cytoplasmic-facing; the sequence is RIARILAGSKKKICTRKPRFMSA. The helical transmembrane segment at 704-727 threads the bilayer; that stretch reads WAQVIIASILISVQLTLVVTLIIM. At 728-750 the chain is on the extracellular side; the sequence is EPPMPILSYPSIKEVYLICNTSN. The helical transmembrane segment at 751–772 threads the bilayer; that stretch reads LGVVAPLGYNGLLIMSCTYYAF. Residues 773-785 lie on the Cytoplasmic side of the membrane; that stretch reads KTRNVPANFNEAK. The chain crosses the membrane as a helical span at residues 786–807; it reads YIAFTMYTTCIIWLAFVPIYFG. Over 808–815 the chain is Extracellular; that stretch reads SNYKIITT. Residues 816-840 form a helical membrane-spanning segment; sequence CFAVSLSVTVALGCMFTPKMYIIIA. Residues 841 to 1194 are Cytoplasmic-facing; it reads KPERNVRSAF…RDYKQSSSTL (354 aa). Residue Ser853 is modified to Phosphoserine. Thr871 is modified (phosphothreonine). Residues 883–905 form a disordered region; sequence AGNANSNGKSVSWSEPGGGQVPK. Polar residues predominate over residues 885-895; that stretch reads NANSNGKSVSW. Ser894 and Ser969 each carry phosphoserine. The segment at 1007–1030 is disordered; that stretch reads PALPKGLPPPLQQQQQPPPQQKSL. Over residues 1012–1026 the composition is skewed to pro residues; that stretch reads GLPPPLQQQQQPPPQ. Ser1091 bears the Phosphoserine mark. The interval 1113–1173 is disordered; the sequence is HEREGNTEED…SPVSESVLCT (61 aa). Residues 1119–1131 show a composition bias toward acidic residues; that stretch reads TEEDELEEEEEDL. Ser1142 carries the phosphoserine modification. Phosphothreonine is present on Thr1146. A Phosphoserine modification is found at Ser1149. The segment covering 1154 to 1170 has biased composition (low complexity); the sequence is SVASGSSVPSSPVSESV.

The protein belongs to the G-protein coupled receptor 3 family. Homodimer; disulfide-linked. The PPXXF motif binds HOMER1, HOMER2 and HOMER3. Interacts with TAMALIN. Interacts with RYR1, RYR2, ITPR1, SHANK1 and SHANK3. Interacts with SIAH1. As to expression, detected in brain.

It localises to the cell membrane. The protein resides in the postsynaptic cell membrane. It is found in the cell projection. The protein localises to the dendrite. Signaling is inhibited by the antagonist LY341495. The LY341495 binding site partially overlaps with the glutamate binding site. Signaling is also inhibited by synthetic allosteric regulators, such as FITM (4-fluoro-N-(4-(6-(isopropylamino)pyrimidin-4-yl)thiazol-2-yl)-N-methylbenzamide) that bind in a pocket between the transmembrane helices. G-protein coupled receptor for glutamate. Ligand binding causes a conformation change that triggers signaling via guanine nucleotide-binding proteins (G proteins) and modulates the activity of down-stream effectors. Signaling activates a phosphatidylinositol-calcium second messenger system. May participate in the central action of glutamate in the CNS, such as long-term potentiation in the hippocampus and long-term depression in the cerebellum. May function in the light response in the retina. Induces GRID1 and GRID2 cation-channel activation via GNAQ-PLC-PKC pathway in dopaminergic neurons and cerebellar Purkinje cell, respectively. In Homo sapiens (Human), this protein is Metabotropic glutamate receptor 1 (GRM1).